The sequence spans 1663 residues: Glutamine-rich protein 2 (1663 aa).

Disordered regions lie at residues 80 to 239, 423 to 481, 575 to 615, 880 to 925, and 948 to 984; these read HGGF…LVPA, GLVQ…GTGQ, AQPR…QHGL, TYQQ…QVYP, and RGPGYLSADQHGQEGLDPNRTRASDRHGIPAQKAPGQ. 2 stretches are compositionally biased toward polar residues: residues 84 to 103 and 131 to 150; these read TSLTSPEGTLSGDSTKQPSI and GVSSREQSKVPSGTGRQQQP. Basic and acidic residues predominate over residues 171 to 182; that stretch reads SDSDRHRSREKL. Low complexity predominate over residues 206-217; it reads QPSSVPASQSQV. A compositionally biased stretch (basic and acidic residues) spans 958–975; sequence HGQEGLDPNRTRASDRHG. Coiled coils occupy residues 1085–1160 and 1286–1325; these read KTVK…MENS and EDHRQKQKDIAMLYQGLEKLEKEKANREHLEMEIDVKADK. A compositionally biased stretch (basic and acidic residues) spans 1609–1619; it reads TRLPGILRKDS. The interval 1609–1663 is disordered; it reads TRLPGILRKDSSGTSKRKSQQPRPHVHRPPSLSSNGQLPSRPQSAQISAGNTSER. Basic residues predominate over residues 1623–1636; that stretch reads SKRKSQQPRPHVHR. The segment covering 1639–1663 has biased composition (polar residues); that stretch reads SLSSNGQLPSRPQSAQISAGNTSER.

In terms of assembly, interacts with AKAP3, ODF2 and TSSK4. Interacts with AKAP4. Expressed in the sperm.

It localises to the nucleus membrane. The protein localises to the nucleus. It is found in the cytoplasm. The protein resides in the cell projection. Its subcellular location is the cilium. It localises to the flagellum. Has an essential role in the formation of sperm flagella and flagellar structure maintainance. It acts as a suppressor of ubiquitination and degradation of proteins involved in flagellar development and motility. The polypeptide is Glutamine-rich protein 2 (QRICH2) (Homo sapiens (Human)).